Reading from the N-terminus, the 162-residue chain is Neuritin-like protein (162 aa).

An N-terminal signal peptide occupies residues 1–32 (MMCNCCHCHWRRRCQRLPCALTLLLLLPLAVA). A lipid anchor (GPI-anchor amidated alanine) is attached at alanine 136. Positions 137-162 (PALAPAPAPVLLAAALALACLLGPLA) are cleaved as a propeptide — removed in mature form.

It belongs to the neuritin family.

The protein resides in the cell membrane. This is Neuritin-like protein (Nrn1l) from Mus musculus (Mouse).